We begin with the raw amino-acid sequence, 2117 residues long: Tudor domain-containing 6 (2117 aa).

Tudor domains follow at residues 62 to 118, 291 to 350, 527 to 584, 757 to 816, and 974 to 1030; these read DGNP…FFYL, AENL…FFRM, KPVV…FQQL, EPLL…FLKM, and PQTF…AGDI. Positions 1125 to 1216 are disordered; the sequence is ASACKKESST…SSKPEVVKPK (92 aa). Over residues 1127 to 1152 the composition is skewed to basic and acidic residues; that stretch reads ACKKESSTGPKRDAIDQVPKSRESHA. 2 stretches are compositionally biased toward polar residues: residues 1153-1174 and 1181-1209; these read IQRSNDVASKQPQSRWGFSTNG and DSGTINNCQKQPELRTSQGNLRHPCTSSK. Tudor domains lie at 1282 to 1340 and 1485 to 1543; these read DIHE…FASF and CMPV…LSDV.

Interacts (via Tudor domain) with buc (when dimethylated on arginine residues); and may be responsible for recruitment of different protein complexes to germ plasm.

The protein localises to the cytoplasm. Functionally, tudor domain-containing protein involved in germ cell development, more specifically the formation of chromatoid body (during spermiogenesis), Balbiani body (during oogenesis), germ plasm (upon fertilization), and for proper miRNA expression and spliceosome maturation. Required for Balbiani body and germ plasm formation and mobility through interaction with dimethylated arginines in the prion-like protein Bucky ball (buc). Coordinates transcript deposition into future primordial germ cells. Interacts with known germ plasm mRNAs such as vasa, dazl, nanos3 and hook2. This Danio rerio (Zebrafish) protein is Tudor domain-containing 6.